The primary structure comprises 249 residues: ATP synthase subunit a, chloroplastic (249 aa).

Transmembrane regions (helical) follow at residues 40 to 60 (QVLITSWVVIAILLGSAVLAI), 97 to 117 (VPFIGTLFLFIFVSNWSGALL), 136 to 156 (INTTVALALLTSAAYFYAGLS), 201 to 221 (LVVVVLVSLVPLVVPIPVMFL), and 222 to 242 (GLFTSGIQALIFATLAAAYIG).

It belongs to the ATPase A chain family. As to quaternary structure, F-type ATPases have 2 components, CF(1) - the catalytic core - and CF(0) - the membrane proton channel. CF(1) has five subunits: alpha(3), beta(3), gamma(1), delta(1), epsilon(1). CF(0) has four main subunits: a, b, b' and c.

The protein localises to the plastid. It localises to the chloroplast thylakoid membrane. Functionally, key component of the proton channel; it plays a direct role in the translocation of protons across the membrane. The polypeptide is ATP synthase subunit a, chloroplastic (Capsella bursa-pastoris (Shepherd's purse)).